Consider the following 313-residue polypeptide: RHOMBOID-like protein 7 (313 aa).

The span at 1 to 11 (MLSTAAEEDPE) shows a compositional bias: acidic residues. The interval 1–24 (MLSTAAEEDPEGGSRETNNGGETT) is disordered. The segment covering 15-24 (RETNNGGETT) has biased composition (polar residues). The next 7 helical transmembrane spans lie at 31–51 (SWII…VMYY), 112–132 (WLHA…YIGV), 143–163 (VGTI…LFLE), 166–186 (ISVG…SELL), 196–216 (GVAI…GTLP), 221–241 (FAHI…LIHP), and 269–289 (LCIV…VILF). The active-site Nucleophile is S171. The Charge relay system role is filled by H223.

This sequence belongs to the peptidase S54 family.

Its subcellular location is the membrane. The enzyme catalyses Cleaves type-1 transmembrane domains using a catalytic dyad composed of serine and histidine that are contributed by different transmembrane domains.. Functionally, probable rhomboid-type serine protease that catalyzes intramembrane proteolysis. May function in embryo development. This is RHOMBOID-like protein 7 from Arabidopsis thaliana (Mouse-ear cress).